A 492-amino-acid chain; its full sequence is JmjC domain-containing histone demethylation protein 1 (492 aa).

The segment at 4 to 72 (PNICQHCQLK…SYRCPNHKEG (69 aa)) adopts a PHD-type; atypical zinc-finger fold. One can recognise a JmjC domain in the interval 254–409 (TAVRQNDLVD…THLKIVEIEK (156 aa)). Residue T302 participates in substrate binding. Fe cation is bound by residues H305 and D307. K322 serves as a coordination point for substrate. A Fe cation-binding site is contributed by H377.

The protein belongs to the JHDM1 histone demethylase family. Fe(2+) serves as cofactor.

Its subcellular location is the nucleus. The catalysed reaction is N(6),N(6)-dimethyl-L-lysyl(36)-[histone H3] + 2 2-oxoglutarate + 2 O2 = L-lysyl(36)-[histone H3] + 2 formaldehyde + 2 succinate + 2 CO2. Functionally, histone demethylase that specifically demethylates 'Lys-36' of histone H3, thereby playing a central role in histone code. Does not demethylate H3 'Lys-4' nor 'Lys-79'. The chain is JmjC domain-containing histone demethylation protein 1 (JHD1) from Saccharomyces cerevisiae (strain ATCC 204508 / S288c) (Baker's yeast).